The following is a 390-amino-acid chain: 23S rRNA (uracil(747)-C(5))-methyltransferase RlmC (390 aa).

Cys12, Cys20, Cys23, and Cys100 together coordinate [4Fe-4S] cluster. Positions 225, 254, 275, and 322 each coordinate S-adenosyl-L-methionine. The Nucleophile role is filled by Cys349.

It belongs to the class I-like SAM-binding methyltransferase superfamily. RNA M5U methyltransferase family. RlmC subfamily.

The catalysed reaction is uridine(747) in 23S rRNA + S-adenosyl-L-methionine = 5-methyluridine(747) in 23S rRNA + S-adenosyl-L-homocysteine + H(+). Catalyzes the formation of 5-methyl-uridine at position 747 (m5U747) in 23S rRNA. This Shewanella baltica (strain OS155 / ATCC BAA-1091) protein is 23S rRNA (uracil(747)-C(5))-methyltransferase RlmC.